A 447-amino-acid polypeptide reads, in one-letter code: Drebrin-like protein A (447 aa).

The 132-residue stretch at 2–133 folds into the ADF-H domain; sequence SVNLSKNGAA…EPESIMEKVA (132 aa). Disordered regions lie at residues 141-160 and 184-368; these read NFHKESKRGNEGPQGPVGSV and KDEE…TENQ. Residues 180–245 adopt a coiled-coil conformation; that stretch reads AKAEKDEEER…EQEETEKQQT (66 aa). Residues 184–242 are compositionally biased toward basic and acidic residues; that stretch reads KDEEERRMEENRRANSEKDRLERERKEREQREAETREQRFRERAKEIDAQRKEQEETEK. Residues 246-255 are compositionally biased toward polar residues; it reads VPASQRSVNP. Residues 319-328 are compositionally biased toward pro residues; it reads PESPVPPVSH. The segment covering 345–365 has biased composition (acidic residues); sequence QEEENIYQDATEDQNIYEDTT. Residues 388-447 form the SH3 domain; sequence EKGVCARALYDYQAADDTEISFDPDDLITQIQFIDEGWWRGFSPAGHFGMFPANYVELLE.

Belongs to the ABP1 family.

It is found in the cytoplasm. It localises to the cytoskeleton. Its subcellular location is the cell projection. The protein resides in the lamellipodium. The protein localises to the ruffle. It is found in the cell cortex. It localises to the cytosol. Its subcellular location is the synapse. The protein resides in the perikaryon. The protein localises to the neuron projection. It is found in the cell membrane. It localises to the cytoplasmic vesicle. Its subcellular location is the clathrin-coated vesicle membrane. The protein resides in the golgi apparatus membrane. The protein localises to the podosome. It is found in the early endosome. It localises to the dendrite. Its subcellular location is the postsynaptic density. Functionally, adapter protein that binds F-actin and dynamin, and thereby plays a role in receptor-mediated endocytosis. Plays a role in the reorganization of the actin cytoskeleton, formation of cell projections, such as neurites, in neuron morphogenesis and synapse formation. Does not bind G-actin and promote actin polymerization by itself, but excerts its functions by interaction with other proteins. Required for the formation of organized podosome rosettes. This is Drebrin-like protein A (dbnl-a) from Xenopus laevis (African clawed frog).